Here is a 195-residue protein sequence, read N- to C-terminus: MDITKLINLFAKLPSLGPASSRRIVLHLLRHRQDVMVPLAAGIRELEMHTKECTICHNLDTISPCSICSDKGRDQSIICVVEELGDLWAFERGRIYSGVYHVLGGALSALSGIGPEDLNLGGIVDRIRTHGVKEVIVATSNDMDGQVTCHYIAQMVKGTDAKVTRLACGIPLGGEIDYLDEGTLRAALSSRYVIT.

Residues 53–68 (CTICHNLDTISPCSIC) form a C4-type zinc finger. In terms of domain architecture, Toprim spans 76–171 (SIICVVEELG…KVTRLACGIP (96 aa)).

This sequence belongs to the RecR family.

In terms of biological role, may play a role in DNA repair. It seems to be involved in an RecBC-independent recombinational process of DNA repair. It may act with RecF and RecO. The sequence is that of Recombination protein RecR from Anaplasma marginale (strain St. Maries).